Consider the following 217-residue polypeptide: ATP phosphoribosyltransferase (217 aa).

Belongs to the ATP phosphoribosyltransferase family. Short subfamily. Heteromultimer composed of HisG and HisZ subunits.

The protein resides in the cytoplasm. The catalysed reaction is 1-(5-phospho-beta-D-ribosyl)-ATP + diphosphate = 5-phospho-alpha-D-ribose 1-diphosphate + ATP. The protein operates within amino-acid biosynthesis; L-histidine biosynthesis; L-histidine from 5-phospho-alpha-D-ribose 1-diphosphate: step 1/9. Catalyzes the condensation of ATP and 5-phosphoribose 1-diphosphate to form N'-(5'-phosphoribosyl)-ATP (PR-ATP). Has a crucial role in the pathway because the rate of histidine biosynthesis seems to be controlled primarily by regulation of HisG enzymatic activity. In Polaromonas naphthalenivorans (strain CJ2), this protein is ATP phosphoribosyltransferase.